Consider the following 91-residue polypeptide: M-myrmeciitoxin-Mb3a (91 aa).

The N-terminal stretch at 1–21 (MKLSCLSLALAIILILAIVHS) is a signal peptide. The propeptide occupies 22–54 (PNMEVKALADPEADAFGEANAFGEADAFAEANA).

In terms of assembly, homodimer; disulfide-linked. Expressed by the venom gland and reservoir.

The protein localises to the secreted. Its function is as follows. Causes a significant and dose-dependent histamine release, probably by influencing the signal transduction of mast cells through a non-IgE-mediated pathway. This peptide does not have cytotoxic activities. The polypeptide is M-myrmeciitoxin-Mb3a (Myrmecia banksi (Jack jumper ant)).